Reading from the N-terminus, the 293-residue chain is Nucleotide-binding protein OB2468 (293 aa).

14 to 21 (GMSGAGKT) is an ATP binding site. 65-68 (DLRG) serves as a coordination point for GTP.

Belongs to the RapZ-like family.

In terms of biological role, displays ATPase and GTPase activities. The protein is Nucleotide-binding protein OB2468 of Oceanobacillus iheyensis (strain DSM 14371 / CIP 107618 / JCM 11309 / KCTC 3954 / HTE831).